A 398-amino-acid chain; its full sequence is 2,3,4,5-tetrahydropyridine-2,6-dicarboxylate N-succinyltransferase (398 aa).

The Acyl-anhydride intermediate role is filled by Glu268. Residues Arg270, Gly285, Ser288, Ala311, 326-327, Gly334, Lys361, and 374-377 each bind succinyl-CoA; these read DG and RQNS.

Belongs to the type 2 tetrahydrodipicolinate N-succinyltransferase family. As to quaternary structure, homotrimer.

It localises to the cytoplasm. It carries out the reaction (S)-2,3,4,5-tetrahydrodipicolinate + succinyl-CoA + H2O = (S)-2-succinylamino-6-oxoheptanedioate + CoA. The protein operates within amino-acid biosynthesis; L-lysine biosynthesis via DAP pathway; LL-2,6-diaminopimelate from (S)-tetrahydrodipicolinate (succinylase route): step 1/3. Its function is as follows. Catalyzes the conversion of the cyclic tetrahydrodipicolinate (THDP) into the acyclic N-succinyl-L-2-amino-6-oxopimelate using succinyl-CoA. The chain is 2,3,4,5-tetrahydropyridine-2,6-dicarboxylate N-succinyltransferase from Sulfurimonas denitrificans (strain ATCC 33889 / DSM 1251) (Thiomicrospira denitrificans (strain ATCC 33889 / DSM 1251)).